The chain runs to 200 residues: NADH-quinone oxidoreductase subunit C (200 aa).

The protein belongs to the complex I 30 kDa subunit family. As to quaternary structure, NDH-1 is composed of 14 different subunits. Subunits NuoB, C, D, E, F, and G constitute the peripheral sector of the complex.

The protein localises to the cell inner membrane. It catalyses the reaction a quinone + NADH + 5 H(+)(in) = a quinol + NAD(+) + 4 H(+)(out). Functionally, NDH-1 shuttles electrons from NADH, via FMN and iron-sulfur (Fe-S) centers, to quinones in the respiratory chain. The immediate electron acceptor for the enzyme in this species is believed to be ubiquinone. Couples the redox reaction to proton translocation (for every two electrons transferred, four hydrogen ions are translocated across the cytoplasmic membrane), and thus conserves the redox energy in a proton gradient. The chain is NADH-quinone oxidoreductase subunit C from Thiobacillus denitrificans (strain ATCC 25259 / T1).